Consider the following 160-residue polypeptide: Endoribonuclease YbeY (160 aa).

Residues His112, His116, and His122 each contribute to the Zn(2+) site. The tract at residues 141-160 (ELGHPDPYACDDEEPPSKEK) is disordered.

Belongs to the endoribonuclease YbeY family. Zn(2+) serves as cofactor.

It localises to the cytoplasm. Its function is as follows. Single strand-specific metallo-endoribonuclease involved in late-stage 70S ribosome quality control and in maturation of the 3' terminus of the 16S rRNA. This chain is Endoribonuclease YbeY, found in Pseudomonas paraeruginosa (strain DSM 24068 / PA7) (Pseudomonas aeruginosa (strain PA7)).